Here is a 515-residue protein sequence, read N- to C-terminus: 2-isopropylmalate synthase (515 aa).

Residues 4-266 (IKFFDTTLRD…ETRLNLQEIK (263 aa)) enclose the Pyruvate carboxyltransferase domain. Mn(2+) is bound by residues D13, H201, H203, and N237. Residues 391–515 (QLSSIQVQYG…RAENEKVATS (125 aa)) form a regulatory domain region.

It belongs to the alpha-IPM synthase/homocitrate synthase family. LeuA type 1 subfamily. In terms of assembly, homodimer. Requires Mn(2+) as cofactor.

The protein resides in the cytoplasm. The enzyme catalyses 3-methyl-2-oxobutanoate + acetyl-CoA + H2O = (2S)-2-isopropylmalate + CoA + H(+). Its pathway is amino-acid biosynthesis; L-leucine biosynthesis; L-leucine from 3-methyl-2-oxobutanoate: step 1/4. Functionally, catalyzes the condensation of the acetyl group of acetyl-CoA with 3-methyl-2-oxobutanoate (2-ketoisovalerate) to form 3-carboxy-3-hydroxy-4-methylpentanoate (2-isopropylmalate). The sequence is that of 2-isopropylmalate synthase from Geobacillus stearothermophilus (Bacillus stearothermophilus).